The primary structure comprises 635 residues: Threonine--tRNA ligase (635 aa).

The TGS domain maps to 1-61 (MIVITLPDGS…EGDARLAIVT (61 aa)). The interval 242 to 533 (DHRKLGRELD…LIEQHAGALP (292 aa)) is catalytic. Zn(2+) contacts are provided by C333, H384, and H510.

The protein belongs to the class-II aminoacyl-tRNA synthetase family. As to quaternary structure, homodimer. Zn(2+) serves as cofactor.

The protein resides in the cytoplasm. It carries out the reaction tRNA(Thr) + L-threonine + ATP = L-threonyl-tRNA(Thr) + AMP + diphosphate + H(+). Catalyzes the attachment of threonine to tRNA(Thr) in a two-step reaction: L-threonine is first activated by ATP to form Thr-AMP and then transferred to the acceptor end of tRNA(Thr). Also edits incorrectly charged L-seryl-tRNA(Thr). The protein is Threonine--tRNA ligase of Methylibium petroleiphilum (strain ATCC BAA-1232 / LMG 22953 / PM1).